The chain runs to 206 residues: Sclerostin domain-containing protein 1 (206 aa).

The N-terminal stretch at methionine 1–alanine 23 is a signal peptide. Residue asparagine 47 is glycosylated (N-linked (GlcNAc...) asparagine). Intrachain disulfides connect cysteine 75–cysteine 133, cysteine 89–cysteine 147, cysteine 100–cysteine 163, and cysteine 104–cysteine 165. The region spanning cysteine 75–arginine 170 is the CTCK domain. An N-linked (GlcNAc...) asparagine glycan is attached at asparagine 173. A disordered region spans residues serine 176–serine 206. A compositionally biased stretch (basic residues) spans valine 188–serine 206.

This sequence belongs to the sclerostin family. As to quaternary structure, interacts with BMP2, BMP4, BMP6 and BMP7 with high affinity.

The protein resides in the secreted. Its function is as follows. Directly antagonizes activity of BMP2, BMP4, BMP6 and BMP7 in a dose-dependent manner. Enhances Wnt signaling and inhibits TGF-beta signaling. May be involved in the onset of endometrial receptivity for implantation/sensitization for the decidual cell reaction. This Pongo abelii (Sumatran orangutan) protein is Sclerostin domain-containing protein 1 (SOSTDC1).